A 101-amino-acid polypeptide reads, in one-letter code: Chaperone modulatory protein CbpM (101 aa).

Belongs to the CbpM family.

Interacts with CbpA and inhibits both the DnaJ-like co-chaperone activity and the DNA binding activity of CbpA. Together with CbpA, modulates the activity of the DnaK chaperone system. Does not inhibit the co-chaperone activity of DnaJ. This Salmonella paratyphi A (strain ATCC 9150 / SARB42) protein is Chaperone modulatory protein CbpM.